Consider the following 433-residue polypeptide: Protein RETICULATA-RELATED 1, chloroplastic (433 aa).

Residues 1–63 (MSISLKISHI…LSSRNLRNRC (63 aa)) constitute a chloroplast transit peptide. An N-acetylvaline modification is found at Val-64. A compositionally biased stretch (acidic residues) spans 93–105 (DLEPELDDGDGGD). The disordered stretch occupies residues 93–143 (DLEPELDDGDGGDENGNNDGGGNGGNGDGGGGGGDGEGDDGEDEADKAEEK). Positions 110–127 (NDGGGNGGNGDGGGGGGD) are enriched in gly residues. Residues 128-139 (GEGDDGEDEADK) are compositionally biased toward acidic residues. 2 consecutive transmembrane segments (helical) span residues 249–269 (LYAADLLVGLVVDVALVGLLA) and 323–343 (LLYGSVGFGCGLIGQGIANLI).

It belongs to the RETICULATA family. Expressed in root vasculature, distal region of young leaf primordia, leaf bundle sheath cells, hydathodes and pollen grains.

The protein localises to the plastid. The protein resides in the chloroplast membrane. Functionally, may play a role in leaf development. This chain is Protein RETICULATA-RELATED 1, chloroplastic, found in Arabidopsis thaliana (Mouse-ear cress).